A 603-amino-acid polypeptide reads, in one-letter code: Leucine-rich repeat-containing protein 40 (603 aa).

The segment at 1-27 (MAAARRARAGDPRAGFRRAAEEQSPAV) is disordered. 20 LRR repeats span residues 83 to 104 (DLTK…VRLL), 106 to 127 (ALTV…LGQL), 129 to 150 (NLQK…LLQL), 152 to 173 (HLKG…FGQL), 175 to 196 (SLEE…FALL), 198 to 219 (NLVR…ISAM), 221 to 242 (SLRQ…LASM), 244 to 265 (SLEQ…PSCK), 266 to 286 (LLKE…ENLK), 290 to 311 (SLSV…ITLL), 313 to 335 (KLER…GNLS), 336 to 357 (QLKF…LLQK), 401 to 422 (TLKL…VFSA), 427 to 449 (PVTS…VELK), 451 to 473 (SVCD…CTLH), 474 to 495 (KLTH…MEAL), 497 to 518 (RLQV…LYRM), 520 to 541 (ALET…QLKK), 544 to 565 (QLGT…LGNC), and 567 to 588 (TLRT…ILAK).

This Gallus gallus (Chicken) protein is Leucine-rich repeat-containing protein 40 (LRRC40).